The chain runs to 213 residues: Large ribosomal subunit protein uL1 (213 aa).

Belongs to the universal ribosomal protein uL1 family. Part of the 50S ribosomal subunit.

Its function is as follows. Probably involved in E site tRNA release. Binds directly to 23S rRNA. Protein L1 is also a translational repressor protein, it controls the translation of its operon by binding to its mRNA. This is Large ribosomal subunit protein uL1 from Methanothermococcus thermolithotrophicus (Methanococcus thermolithotrophicus).